Reading from the N-terminus, the 87-residue chain is RNA-binding protein Hfq (87 aa).

In terms of domain architecture, Sm spans 9–68 (DPYLNVLRKERIPVSIYLVNGIKLQGQVESFDQFVVLLKNTVSQMVYKHAISTVVPSRPV).

The protein belongs to the Hfq family. In terms of assembly, homohexamer.

RNA chaperone that binds small regulatory RNA (sRNAs) and mRNAs to facilitate mRNA translational regulation in response to envelope stress, environmental stress and changes in metabolite concentrations. Also binds with high specificity to tRNAs. The sequence is that of RNA-binding protein Hfq from Teredinibacter turnerae (strain ATCC 39867 / T7901).